Reading from the N-terminus, the 94-residue chain is Co-chaperonin GroES (94 aa).

It belongs to the GroES chaperonin family. Heptamer of 7 subunits arranged in a ring. Interacts with the chaperonin GroEL.

The protein localises to the cytoplasm. Its function is as follows. Together with the chaperonin GroEL, plays an essential role in assisting protein folding. The GroEL-GroES system forms a nano-cage that allows encapsulation of the non-native substrate proteins and provides a physical environment optimized to promote and accelerate protein folding. GroES binds to the apical surface of the GroEL ring, thereby capping the opening of the GroEL channel. In Streptococcus oralis, this protein is Co-chaperonin GroES.